Here is a 488-residue protein sequence, read N- to C-terminus: UDP-N-acetylmuramate--L-alanine ligase (488 aa).

129–135 is an ATP binding site; that stretch reads GTHGKTT.

This sequence belongs to the MurCDEF family.

The protein localises to the cytoplasm. The catalysed reaction is UDP-N-acetyl-alpha-D-muramate + L-alanine + ATP = UDP-N-acetyl-alpha-D-muramoyl-L-alanine + ADP + phosphate + H(+). It functions in the pathway cell wall biogenesis; peptidoglycan biosynthesis. In terms of biological role, cell wall formation. This Chromohalobacter salexigens (strain ATCC BAA-138 / DSM 3043 / CIP 106854 / NCIMB 13768 / 1H11) protein is UDP-N-acetylmuramate--L-alanine ligase.